The primary structure comprises 855 residues: Leucine--tRNA ligase (855 aa).

Positions 42–52 (PYPSGSLHVGH) match the 'HIGH' region motif. The interval 292-311 (SEMDRTAEDKPKKGIPTGGK) is disordered. Residues 293-303 (EMDRTAEDKPK) are compositionally biased toward basic and acidic residues. The short motif at 614 to 618 (KMSKS) is the 'KMSKS' region element. K617 lines the ATP pocket.

The protein belongs to the class-I aminoacyl-tRNA synthetase family.

It localises to the cytoplasm. The catalysed reaction is tRNA(Leu) + L-leucine + ATP = L-leucyl-tRNA(Leu) + AMP + diphosphate. This is Leucine--tRNA ligase from Acaryochloris marina (strain MBIC 11017).